A 133-amino-acid chain; its full sequence is ATP synthase epsilon chain (133 aa).

Belongs to the ATPase epsilon chain family. F-type ATPases have 2 components, CF(1) - the catalytic core - and CF(0) - the membrane proton channel. CF(1) has five subunits: alpha(3), beta(3), gamma(1), delta(1), epsilon(1). CF(0) has three main subunits: a, b and c.

It localises to the cell membrane. Its function is as follows. Produces ATP from ADP in the presence of a proton gradient across the membrane. The chain is ATP synthase epsilon chain from Clostridium botulinum (strain Langeland / NCTC 10281 / Type F).